Reading from the N-terminus, the 678-residue chain is Exoribonuclease 2 (678 aa).

The RNB domain occupies Arg193 to Ile521. One can recognise an S1 motif domain in the interval Glu568–Thr650. Residues Ser658–Ala678 are disordered.

This sequence belongs to the RNR ribonuclease family. RNase II subfamily.

It is found in the cytoplasm. It catalyses the reaction Exonucleolytic cleavage in the 3'- to 5'-direction to yield nucleoside 5'-phosphates.. Its function is as follows. Involved in mRNA degradation. Hydrolyzes single-stranded polyribonucleotides processively in the 3' to 5' direction. This chain is Exoribonuclease 2, found in Vibrio cholerae serotype O1 (strain ATCC 39541 / Classical Ogawa 395 / O395).